Consider the following 518-residue polypeptide: Fusicoccin H C-9 hydroxylase (518 aa).

The chain crosses the membrane as a helical span at residues His12–Ser29. Asn81 and Asn168 each carry an N-linked (GlcNAc...) asparagine glycan. Cys456 contacts heme.

It belongs to the cytochrome P450 family. Heme serves as cofactor.

It localises to the membrane. Its pathway is mycotoxin biosynthesis. In terms of biological role, cytochrome P450 monooxygenase; part of the 2 gene clusters that mediate the biosynthesis of fusicoccins, diterpene glucosides that display phytohormone-like activity and function as potent activators of plasma membrane H(+)-ATPases in plants by modifying 14-3-3 proteins and cause the plant disease constriction canker. The first step in the pathway is performed by the fusicoccadiene synthase PaFS that possesses both prenyl transferase and terpene cyclase activity, converting isopentenyl diphosphate and dimethylallyl diphosphate into geranylgeranyl diphosphate (GGDP) and successively converting GGDP into fusicocca-2,10(14)-diene, a precursor for fusicoccin H. The second step is the oxidation at the C-8 position by the cytochrome P450 monooxygenase PaP450-2 to yield fusicocca-2,10(14)-diene-8-beta-ol. The cytochrome P450 monooxygenase PaP450-1 then catalyzes the hydroxylation at the C-16 position to produce fusicocca-2,10(14)-diene-8-beta,16-diol. The dioxygenase fc-dox then catalyzes the 16-oxydation of fusicocca-2,10(14)-diene-8-beta,16-diol to yield an aldehyde (8-beta-hydroxyfusicocca-1,10(14)-dien-16-al). The short-chain dehydrogenase/reductase fc-sdr catalyzes the reduction of the aldehyde to yield fusicocca-1,10(14)-diene-8-beta,16-diol. The next step is the hydroxylation at C-9 performed by the cytochrome P450 monooxygenase PaP450-3 that leads to fusicoccin H aglycon which is glycosylated to fusicoccin H by the O-glycosyltransferase PaGT. Hydroxylation at C-12 by the cytochrome P450 monooxygenase PaP450-4 leads then to the production of fusicoccin Q and is followed by methylation by the O-methyltransferase PaMT to yield fusicoccin P. Fusicoccin P is further converted to fusicoccin J via prenylation by the O-glucose prenyltransferase PaPT. Cytochrome P450 monooxygenase PaP450-5 then performs hydroxylation at C-19 to yield dideacetyl-fusicoccin A which is acetylated to 3'-O-deacetyl-fusicoccin A by the O-acetyltransferase PaAT-2. Finally, a another acetylation by the O-acetyltransferase PaAT-1 yields fusicoccin A. This is Fusicoccin H C-9 hydroxylase from Phomopsis amygdali (Fusicoccum amygdali).